The following is a 579-amino-acid chain: Rhoptry surface protein CERLI2 (579 aa).

The C2 domain maps to 52 to 84 (LHNYRTFYLLIKINEIFNINKYKQIYIIVNTDK). A run of 11 repeats spans residues 442–451 (QTDEIKNDNI), 452–461 (QTDEIKNDHI), 462–471 (QTDEIKNDNI), 472–481 (QTDEIKNDNI), 482–491 (QTDEIKNDHI), 492–501 (QTDEIKNDNI), 502–511 (QTDEIKNDNI), 522–531 (QTDEINNDHI), 532–541 (QTDEIKNDHI), 542–551 (QTDEIKNDHI), and 552–561 (QTDEIKNDIN). The tract at residues 442–561 (QTDEIKNDNI…QTDEIKNDIN (120 aa)) is 12 X 10 AA tandem repeat of Q-T-E-I-[K/N]-N-D-[H/N/I][I/N].

It is found in the cytoplasmic vesicle. The protein resides in the secretory vesicle. Its subcellular location is the rhoptry membrane. It localises to the cell membrane. The protein localises to the host cell membrane. Functionally, plays an important role in rhoptry physiology and thus is essential for merozoite invasion of host erythrocytes. The sequence is that of Rhoptry surface protein CERLI2 from Plasmodium falciparum (isolate 3D7).